The chain runs to 169 residues: Calcium-binding protein G (169 aa).

EF-hand domains follow at residues 9-44 (KIFQDIQNFIQDYDLNKDYSVTSSEIYQSFLKKMNG), 60-83 (VDMDNDGKFSYYEISKYCADQAKK), 92-127 (AALADVEALLLRLDKDKDKKLNKTEFVKFFKEQGYN), and 133-162 (DYVLKIIDLDKDGYVSASELQEWFKQKRLA). D105, D107, D109, K111, E116, D140, D142, D144, Y146, and E151 together coordinate Ca(2+).

The chain is Calcium-binding protein G (cbpG) from Dictyostelium discoideum (Social amoeba).